We begin with the raw amino-acid sequence, 97 residues long: Large ribosomal subunit protein uL23 (97 aa).

Belongs to the universal ribosomal protein uL23 family. In terms of assembly, part of the 50S ribosomal subunit. Contacts protein L29, and trigger factor when it is bound to the ribosome.

Functionally, one of the early assembly proteins it binds 23S rRNA. One of the proteins that surrounds the polypeptide exit tunnel on the outside of the ribosome. Forms the main docking site for trigger factor binding to the ribosome. The sequence is that of Large ribosomal subunit protein uL23 from Rhizobium etli (strain CIAT 652).